A 199-amino-acid chain; its full sequence is MRKAAITRNTNETSIKVAVDLDGSGKYAVSTGVGFLDHMLEQLSRHSLMDLEVDAKGDLHIDAHHTTEDVGIAIGQAVNQALGDRKGICRYGSAYVPMDEALTRVALDLSNRPYLIWKVAFGRDKLGTMDTELFKEWFQAFAQAAGATLHVESLYGDNDHHIVESCFKALARALREAVEIDPRKADAVPSTKGTLGGSL.

Belongs to the imidazoleglycerol-phosphate dehydratase family.

It localises to the cytoplasm. The enzyme catalyses D-erythro-1-(imidazol-4-yl)glycerol 3-phosphate = 3-(imidazol-4-yl)-2-oxopropyl phosphate + H2O. The protein operates within amino-acid biosynthesis; L-histidine biosynthesis; L-histidine from 5-phospho-alpha-D-ribose 1-diphosphate: step 6/9. The chain is Imidazoleglycerol-phosphate dehydratase from Paramagnetospirillum magneticum (strain ATCC 700264 / AMB-1) (Magnetospirillum magneticum).